A 380-amino-acid polypeptide reads, in one-letter code: Variant-surface-glycoprotein phospholipase C (380 aa).

The 175-residue stretch at 31–205 (ITQVCFVGSH…SRRRIFLVVG (175 aa)) folds into the PI-PLC X-box domain.

As to quaternary structure, monomer.

The protein resides in the membrane. It catalyses the reaction a 6-(alpha-D-glucosaminyl)-1-(1,2-diacyl-sn-glycero-3-phospho)-1D-myo-inositol = 6-(alpha-D-glucosaminyl)-1D-myo-inositol 1,2-cyclic phosphate + a 1,2-diacyl-sn-glycerol. Functionally, by hydrolysis of the attached glycolipid, releases soluble variant surface glycoprotein containing phosphoinositol from the cell wall of T.brucei after cell lysis. It also cleaves similar membrane anchors on some mammalian proteins. VSG lipase may play a role in processes such as parasite differentiation or antigenic variation. This is Variant-surface-glycoprotein phospholipase C from Trypanosoma cruzi.